A 98-amino-acid polypeptide reads, in one-letter code: NADH-ubiquinone oxidoreductase chain 4L (98 aa).

A run of 3 helical transmembrane segments spans residues 2–22 (TLTTMNILLAFFFSLLGTLIF), 29–49 (TLLCLEGMMLSLFIMTTITAL), and 61–81 (ITTLVFAACEAAVGLALLTMV).

The protein belongs to the complex I subunit 4L family. As to quaternary structure, core subunit of respiratory chain NADH dehydrogenase (Complex I) which is composed of 45 different subunits.

Its subcellular location is the mitochondrion inner membrane. The catalysed reaction is a ubiquinone + NADH + 5 H(+)(in) = a ubiquinol + NAD(+) + 4 H(+)(out). In terms of biological role, core subunit of the mitochondrial membrane respiratory chain NADH dehydrogenase (Complex I) which catalyzes electron transfer from NADH through the respiratory chain, using ubiquinone as an electron acceptor. Part of the enzyme membrane arm which is embedded in the lipid bilayer and involved in proton translocation. In Oxymycterus rufus (Red hocicudo), this protein is NADH-ubiquinone oxidoreductase chain 4L (MT-ND4L).